The primary structure comprises 387 residues: Alpha-sarcoglycan (387 aa).

The first 23 residues, 1-23 (MAATLTWILLFVGLLAGLRDTKA), serve as a signal peptide directing secretion. Over 24–290 (QQTTLYPLVG…ATGRDFLADA (267 aa)) the chain is Extracellular. 2 N-linked (GlcNAc...) asparagine glycosylation sites follow: asparagine 174 and asparagine 246. Residues 291-311 (LVTLLVPLLVALLLTLLLAYI) traverse the membrane as a helical segment. The Cytoplasmic portion of the chain corresponds to 312–387 (MCCRREGQLK…AQVPLILDQH (76 aa)). Phosphoserine is present on serine 377.

Belongs to the sarcoglycan alpha/epsilon family. In terms of assembly, interacts with the syntrophin SNTA1. Cross-link to form 2 major subcomplexes: one consisting of SGCB, SGCD and SGCG and the other consisting of SGCB and SGCD. The association between SGCB and SGCG is particularly strong while SGCA is loosely associated with the other sarcoglycans. In terms of tissue distribution, strongly expressed in skeletal and heart muscle.

The protein localises to the cell membrane. It is found in the sarcolemma. Its subcellular location is the cytoplasm. It localises to the cytoskeleton. Functionally, component of the sarcoglycan complex, a subcomplex of the dystrophin-glycoprotein complex which forms a link between the F-actin cytoskeleton and the extracellular matrix. This is Alpha-sarcoglycan (SGCA) from Mesocricetus auratus (Golden hamster).